The primary structure comprises 396 residues: 2-(3-amino-3-carboxypropyl)histidine synthase subunit 1 (396 aa).

[4Fe-4S] cluster is bound by residues Cys89, Cys194, and Cys323. Residues 372–396 (TNNNEANRPKREKRKPHIVVRTEAS) are disordered.

This sequence belongs to the DPH1/DPH2 family. DPH1 subfamily. In terms of assembly, component of the 2-(3-amino-3-carboxypropyl)histidine synthase complex composed of dph-1, dph-2, dph-3 and a NADH-dependent reductase. It depends on [4Fe-4S] cluster as a cofactor.

It catalyses the reaction L-histidyl-[translation elongation factor 2] + S-adenosyl-L-methionine = 2-[(3S)-amino-3-carboxypropyl]-L-histidyl-[translation elongation factor 2] + S-methyl-5'-thioadenosine + H(+). Its pathway is protein modification; peptidyl-diphthamide biosynthesis. Functionally, catalyzes the first step of diphthamide biosynthesis, a post-translational modification of histidine which occurs in elongation factor 2. Dph-1 and dph-2 transfer a 3-amino-3-carboxypropyl (ACP) group from S-adenosyl-L-methionine (SAM) to a histidine residue, the reaction is assisted by a reduction system comprising dph-3 and a NADH-dependent reductase. The chain is 2-(3-amino-3-carboxypropyl)histidine synthase subunit 1 (dph-1) from Caenorhabditis elegans.